We begin with the raw amino-acid sequence, 505 residues long: MGTDNHSVRVSVRGIYATALTKRLLDADYEIVQASPVIRERFDIDFDTVYNTVTVTTTDDHQGVGIHGTESAVRSVADVLTSCGRDTLAWDDLTPPGVIFTAQITETQGSGAICALIPAENPDTESKTEPDLNDVHIPDESVATGYLPYDSTDKHIEQGDIMTVQSHRSMPPWDNTDQRADAVVGTTLRANGGLATLIQGHEGVTVDTYDDEDARELAGMIELIDIDLPTGWGIEVNHAATQASLTALKSGLERAIDRAEDISDGAVAEEVTSTGRWLWFGRESRFALDEIRRSVITTIHGHHRIKAAGETASAGVDLAEALCGDIGDGNVQIQHNEFPFEVVTQQFGPTEGERVELYHGKPEGHAFSLGQGEVTDWDANGTIEVTRRISGHGSGTYDELGTPRESGDTAVTRVREGRWWYPTVYRSRDGEHKGTYVNICTPIECFPKSIRYVDLHVDVVKYPDGTVERVDDDELNTAVTAGHIPPALAEKAQSVASSLERALDK.

The tract at residues 389–408 (ISGHGSGTYDELGTPRESGD) is disordered.

Belongs to the FAU-1 family.

Functionally, probable RNase involved in rRNA stability through maturation and/or degradation of precursor rRNAs. Binds to RNA in loop regions with AU-rich sequences. In Haloquadratum walsbyi (strain DSM 16790 / HBSQ001), this protein is Probable ribonuclease FAU-1.